The sequence spans 231 residues: 7-cyano-7-deazaguanine synthase (231 aa).

An ATP-binding site is contributed by 8-18; it reads FSGGQDSTTCL. Cys188, Cys197, Cys200, and Cys203 together coordinate Zn(2+).

This sequence belongs to the QueC family. The cofactor is Zn(2+).

The catalysed reaction is 7-carboxy-7-deazaguanine + NH4(+) + ATP = 7-cyano-7-deazaguanine + ADP + phosphate + H2O + H(+). The protein operates within purine metabolism; 7-cyano-7-deazaguanine biosynthesis. Functionally, catalyzes the ATP-dependent conversion of 7-carboxy-7-deazaguanine (CDG) to 7-cyano-7-deazaguanine (preQ(0)). The sequence is that of 7-cyano-7-deazaguanine synthase from Erwinia tasmaniensis (strain DSM 17950 / CFBP 7177 / CIP 109463 / NCPPB 4357 / Et1/99).